Here is a 153-residue protein sequence, read N- to C-terminus: ATP synthase subunit b' (153 aa).

Residues 23 to 40 traverse the membrane as a helical segment; that stretch reads LMAIQVVALTYILNSLFF.

This sequence belongs to the ATPase B chain family. In terms of assembly, F-type ATPases have 2 components, F(1) - the catalytic core - and F(0) - the membrane proton channel. F(1) has five subunits: alpha(3), beta(3), gamma(1), delta(1), epsilon(1). F(0) has four main subunits: a(1), b(1), b'(1) and c(10-14). The alpha and beta chains form an alternating ring which encloses part of the gamma chain. F(1) is attached to F(0) by a central stalk formed by the gamma and epsilon chains, while a peripheral stalk is formed by the delta, b and b' chains.

It localises to the cellular thylakoid membrane. In terms of biological role, f(1)F(0) ATP synthase produces ATP from ADP in the presence of a proton or sodium gradient. F-type ATPases consist of two structural domains, F(1) containing the extramembraneous catalytic core and F(0) containing the membrane proton channel, linked together by a central stalk and a peripheral stalk. During catalysis, ATP synthesis in the catalytic domain of F(1) is coupled via a rotary mechanism of the central stalk subunits to proton translocation. Functionally, component of the F(0) channel, it forms part of the peripheral stalk, linking F(1) to F(0). The b'-subunit is a diverged and duplicated form of b found in plants and photosynthetic bacteria. The chain is ATP synthase subunit b' from Prochlorococcus marinus (strain MIT 9301).